The sequence spans 391 residues: Heme A synthase (391 aa).

8 helical membrane-spanning segments follow: residues 37–57 (IRLW…VGGL), 121–141 (RQLG…FLAA), 152–172 (LLAL…MVAS), 186–206 (LATH…QALL), 229–249 (TTVL…VAGI), 298–318 (FLHR…WIFG), 332–352 (LLAM…LSAA), and 354–374 (WQVA…ILHA). Heme is bound at residue His-300. Residue His-360 participates in heme binding.

This sequence belongs to the COX15/CtaA family. Type 2 subfamily. As to quaternary structure, interacts with CtaB. The cofactor is heme b.

The protein localises to the cell membrane. It catalyses the reaction Fe(II)-heme o + 2 A + H2O = Fe(II)-heme a + 2 AH2. It participates in porphyrin-containing compound metabolism; heme A biosynthesis; heme A from heme O: step 1/1. Catalyzes the conversion of heme O to heme A by two successive hydroxylations of the methyl group at C8. The first hydroxylation forms heme I, the second hydroxylation results in an unstable dihydroxymethyl group, which spontaneously dehydrates, resulting in the formyl group of heme A. The sequence is that of Heme A synthase from Cereibacter sphaeroides (strain ATCC 17029 / ATH 2.4.9) (Rhodobacter sphaeroides).